We begin with the raw amino-acid sequence, 707 residues long: Polyribonucleotide nucleotidyltransferase (707 aa).

Residues Asp491 and Asp497 each contribute to the Mg(2+) site. Positions 558-617 (PRIEKIKIHPDKIGLLIGPGGKTIKKISAESGAEITIEDDGTVMIYSSSADSLEAAREMI) constitute a KH domain. One can recognise an S1 motif domain in the interval 622–695 (GEVTVGGIYR…EKGRYKFSRK (74 aa)).

Belongs to the polyribonucleotide nucleotidyltransferase family. Requires Mg(2+) as cofactor.

Its subcellular location is the cytoplasm. The catalysed reaction is RNA(n+1) + phosphate = RNA(n) + a ribonucleoside 5'-diphosphate. Functionally, involved in mRNA degradation. Catalyzes the phosphorolysis of single-stranded polyribonucleotides processively in the 3'- to 5'-direction. The protein is Polyribonucleotide nucleotidyltransferase of Methylacidiphilum infernorum (isolate V4) (Methylokorus infernorum (strain V4)).